Reading from the N-terminus, the 433-residue chain is Enolase (433 aa).

(2R)-2-phosphoglycerate is bound at residue Gln-167. The active-site Proton donor is Glu-209. Residues Asp-246, Glu-291, and Asp-318 each contribute to the Mg(2+) site. Residues Lys-343, Arg-372, Ser-373, and Lys-394 each contribute to the (2R)-2-phosphoglycerate site. Catalysis depends on Lys-343, which acts as the Proton acceptor.

It belongs to the enolase family. Component of the RNA degradosome, a multiprotein complex involved in RNA processing and mRNA degradation. The cofactor is Mg(2+).

It is found in the cytoplasm. The protein resides in the secreted. The protein localises to the cell surface. It carries out the reaction (2R)-2-phosphoglycerate = phosphoenolpyruvate + H2O. The protein operates within carbohydrate degradation; glycolysis; pyruvate from D-glyceraldehyde 3-phosphate: step 4/5. Functionally, catalyzes the reversible conversion of 2-phosphoglycerate (2-PG) into phosphoenolpyruvate (PEP). It is essential for the degradation of carbohydrates via glycolysis. The protein is Enolase of Haemophilus ducreyi (strain 35000HP / ATCC 700724).